Here is a 1318-residue protein sequence, read N- to C-terminus: Maestro heat-like repeat family member 5 (1318 aa).

A disordered region spans residues 1–38 (MDRQCSERPYSCTPTGRVSSAVSQNSRISPPVSTSMKD). The segment covering 12-38 (CTPTGRVSSAVSQNSRISPPVSTSMKD) has biased composition (polar residues). The stretch at 581-618 (DELHFLLSHLYIWLASEKAHERQRAVHSCMILLKFLNH) is one HEAT 1 repeat. Residues 676-695 (ESQAPKELSQAHSDGAPLWN) are disordered. HEAT repeat units lie at residues 769 to 811 (GAKL…SHTC), 840 to 880 (PTSH…LLAA), 996 to 1033 (RQIPAVLRQLLPSLQSPQERERKVAILILTKFLYSPVL), 1037 to 1074 (LPKQAALTVLAQGLHDPSPEVRVLSLQGLSNILFHPDK), 1076 to 1113 (SLLQGQLRPLLDGFFQSSDQVIVCIMGTVSDTLHRLGA), 1118 to 1155 (SQSLGVAISTRSFFNDERDGIRAAAMALFGDLVAAMAD), 1164 to 1200 (QVHQSMVPLLLHLKDQCPAVATQAKFTFYRCAVLLRW), and 1278 to 1315 (VDTNLLFRTFEHLRSDPEPSIREFATSQLSFLQKVSAR).

This chain is Maestro heat-like repeat family member 5 (MROH5), found in Homo sapiens (Human).